Here is a 403-residue protein sequence, read N- to C-terminus: Phosphoglycerate kinase (403 aa).

Residues 21 to 23, Arg-36, 59 to 62, Arg-119, and Arg-154 each bind substrate; these read DFN and HLGR. Residues Lys-207, Gly-299, Glu-330, and 357-360 each bind ATP; that span reads GGDA.

It belongs to the phosphoglycerate kinase family. Monomer.

It is found in the cytoplasm. The catalysed reaction is (2R)-3-phosphoglycerate + ATP = (2R)-3-phospho-glyceroyl phosphate + ADP. The protein operates within carbohydrate degradation; glycolysis; pyruvate from D-glyceraldehyde 3-phosphate: step 2/5. This Chlamydia felis (strain Fe/C-56) (Chlamydophila felis) protein is Phosphoglycerate kinase.